A 209-amino-acid polypeptide reads, in one-letter code: Eukaryotic translation initiation factor 4E (209 aa).

MRNA-binding positions include 51–52, 97–98, and 153–158; these read WH, WE, and RKQAYR.

The protein belongs to the eukaryotic initiation factor 4E family. In terms of assembly, eIF4F is a multi-subunit complex, the composition of which varies with external and internal environmental conditions. It is composed of at least eIF4A, eIF4E and eIF4G. eIF4E is also known to interact with other partners.

Recognizes and binds the 7-methylguanosine-containing mRNA cap during an early step in the initiation of protein synthesis and facilitates ribosome binding by inducing the unwinding of the mRNAs secondary structures. This is Eukaryotic translation initiation factor 4E (TIF45) from Candida albicans (strain SC5314 / ATCC MYA-2876) (Yeast).